Reading from the N-terminus, the 229-residue chain is Urease accessory protein UreF (229 aa).

It belongs to the UreF family. As to quaternary structure, ureD, UreF and UreG form a complex that acts as a GTP-hydrolysis-dependent molecular chaperone, activating the urease apoprotein by helping to assemble the nickel containing metallocenter of UreC. The UreE protein probably delivers the nickel.

It localises to the cytoplasm. Functionally, required for maturation of urease via the functional incorporation of the urease nickel metallocenter. The chain is Urease accessory protein UreF from Corynebacterium efficiens (strain DSM 44549 / YS-314 / AJ 12310 / JCM 11189 / NBRC 100395).